A 335-amino-acid chain; its full sequence is Ornithine carbamoyltransferase (335 aa).

Carbamoyl phosphate contacts are provided by residues serine 56 to threonine 59, glutamine 83, arginine 107, and histidine 134 to glutamine 137. L-ornithine contacts are provided by residues asparagine 168, aspartate 232, and serine 236–methionine 237. Carbamoyl phosphate-binding positions include cysteine 274 to leucine 275 and arginine 320.

The protein belongs to the aspartate/ornithine carbamoyltransferase superfamily. OTCase family.

It is found in the cytoplasm. It carries out the reaction carbamoyl phosphate + L-ornithine = L-citrulline + phosphate + H(+). It participates in amino-acid biosynthesis; L-arginine biosynthesis; L-arginine from L-ornithine and carbamoyl phosphate: step 1/3. Its function is as follows. Reversibly catalyzes the transfer of the carbamoyl group from carbamoyl phosphate (CP) to the N(epsilon) atom of ornithine (ORN) to produce L-citrulline. The protein is Ornithine carbamoyltransferase of Pectobacterium atrosepticum (strain SCRI 1043 / ATCC BAA-672) (Erwinia carotovora subsp. atroseptica).